Here is a 618-residue protein sequence, read N- to C-terminus: Polyamine transporter TPO5 (618 aa).

Residues 1–60 (MPEYTLLADNIRENIVHFDPNGLFDNLHTIVHEDDSQENEEAEHFNYDQVLDKSLLSRGS) lie on the Cytoplasmic side of the membrane. Residues 61–84 (IVGLGLGLMSPVLGMCTSMAIGLI) traverse the membrane as a helical segment. Over 85–90 (NGGPLT) the chain is Extracellular. Residues 91–110 (IMLGFLISGVCIWFSSLSLG) form a helical membrane-spanning segment. Over 111-131 (EIVSKFPMELHVGSAMLAPEK) the chain is Cytoplasmic. Residues 132–148 (LKLVCSWYTGWLMLIGN) traverse the membrane as a helical segment. Residues 149-154 (WTMSTS) are Extracellular-facing. Residues 155 to 171 (ITFAGAQLTISLILMTN) form a helical membrane-spanning segment. At 172–179 (SNLISEAH) the chain is on the cytoplasmic side. The helical transmembrane segment at 180-200 (LIFYTVIVFYLVVTVVGLVNL) threads the bilayer. The Extracellular segment spans residues 201–211 (KFARFIETINK). Residues 212 to 231 (VCVYWIIYAIIFIDILLLVF) traverse the membrane as a helical segment. Over 232–297 (HKGKFRSLKY…EKDIPRGMSN (66 aa)) the chain is Cytoplasmic. Residues 298 to 317 (AVLLSAFSGVIFLIPIMLIL) form a helical membrane-spanning segment. Residues 318–342 (PDNDLLFTNHKVLPIVNIFTKSTDS) are Extracellular-facing. The helical transmembrane segment at 343 to 367 (VVLSFFLVLLILGNLLFSGIGSITT) threads the bilayer. Residues 368-402 (SSRAVYSFSRDQAIPYYDKWTYVEPDSQSKVPKNS) lie on the Cytoplasmic side of the membrane. Residues 403-419 (VVLSMIISYFLGLLALI) form a helical membrane-spanning segment. Topologically, residues 420–425 (STAAFN) are extracellular. Residues 426-449 (AFIGAAVLCLCSATFIPLVLVLFT) form a helical membrane-spanning segment. Topologically, residues 450-464 (RRRAIRSAPVKIRYK) are cytoplasmic. Residues 465-486 (FGWFINIVSIVWLLLSMVSVCL) form a helical membrane-spanning segment. Topologically, residues 487-498 (PTQVPVTFKTMN) are extracellular. The chain crosses the membrane as a helical span at residues 499–516 (YALMVYVFCILVITGLYF). At 517–618 (KWGKYNFRLP…DLADDRRYDI (102 aa)) the chain is on the cytoplasmic side. A Phosphoserine modification is found at S569. The disordered stretch occupies residues 576 to 618 (VHPKSSTENPFEENEENVITDYGDEHHTAEQEFDLADDRRYDI). A compositionally biased stretch (basic and acidic residues) spans 598–618 (GDEHHTAEQEFDLADDRRYDI).

Belongs to the amino acid-polyamine-organocation (APC) superfamily.

Its subcellular location is the golgi apparatus membrane. Required for polyamine transport. Transports putrescine effectively and spermidine less effectively. In Saccharomyces cerevisiae (strain ATCC 204508 / S288c) (Baker's yeast), this protein is Polyamine transporter TPO5 (TPO5).